We begin with the raw amino-acid sequence, 432 residues long: Glutamyl-tRNA reductase (432 aa).

Substrate is bound by residues 49–52 (TCNR), serine 101, 106–108 (EPQ), and glutamine 112. Cysteine 50 serves as the catalytic Nucleophile. 181–186 (GAGETI) provides a ligand contact to NADP(+). Positions 407-432 (FPEKPGYQHPPIATPIVRTDDADPAP) are disordered.

This sequence belongs to the glutamyl-tRNA reductase family. As to quaternary structure, homodimer.

The catalysed reaction is (S)-4-amino-5-oxopentanoate + tRNA(Glu) + NADP(+) = L-glutamyl-tRNA(Glu) + NADPH + H(+). It functions in the pathway porphyrin-containing compound metabolism; protoporphyrin-IX biosynthesis; 5-aminolevulinate from L-glutamyl-tRNA(Glu): step 1/2. Its function is as follows. Catalyzes the NADPH-dependent reduction of glutamyl-tRNA(Glu) to glutamate 1-semialdehyde (GSA). This Xanthomonas oryzae pv. oryzae (strain PXO99A) protein is Glutamyl-tRNA reductase.